Here is a 498-residue protein sequence, read N- to C-terminus: Heat stress transcription factor A-3 (498 aa).

The interval 156 to 180 is disordered; that stretch reads RRRSSPTQQSGLQPGSSGESGLDPE. Residues 160–174 are compositionally biased toward polar residues; the sequence is SPTQQSGLQPGSSGE. A coiled-coil region spans residues 180–235; the sequence is ELNTLRREKSALLQEVTRLKQEHLQTIEQMSTLNQRLESAEDRQKQMVSFLAKLLQ. The interval 184 to 234 is hydrophobic repeat HR-A/B; sequence LRREKSALLQEVTRLKQEHLQTIEQMSTLNQRLESAEDRQKQMVSFLAKLL. The Nuclear localization signal signature appears at 258 to 263; that stretch reads KRKFLK. The disordered stretch occupies residues 263–291; that stretch reads KHVPHGNIDSGESSSQHTGESNLDFSPTS. The segment covering 272-291 has biased composition (polar residues); the sequence is SGESSSQHTGESNLDFSPTS. A Nuclear export signal motif is present at residues 309 to 316; that stretch reads LEDGDLNL. A disordered region spans residues 356-382; sequence LEIPPASGPRGQDPTIGRSKGKNVLSP.

This sequence belongs to the HSF family. Class A subfamily. Homotrimer. Exhibits temperature-dependent phosphorylation.

It is found in the cytoplasm. It localises to the nucleus. Transcriptional regulator that specifically binds DNA of heat shock promoter elements (HSE). This chain is Heat stress transcription factor A-3 (HSFA3), found in Oryza sativa subsp. japonica (Rice).